Consider the following 329-residue polypeptide: 4-hydroxythreonine-4-phosphate dehydrogenase (329 aa).

2 residues coordinate substrate: H137 and T138. The a divalent metal cation site is built by H167, H212, and H267. K275, N284, and R293 together coordinate substrate.

It belongs to the PdxA family. Homodimer. Requires Zn(2+) as cofactor. The cofactor is Mg(2+). It depends on Co(2+) as a cofactor.

It localises to the cytoplasm. The enzyme catalyses 4-(phosphooxy)-L-threonine + NAD(+) = 3-amino-2-oxopropyl phosphate + CO2 + NADH. Its pathway is cofactor biosynthesis; pyridoxine 5'-phosphate biosynthesis; pyridoxine 5'-phosphate from D-erythrose 4-phosphate: step 4/5. In terms of biological role, catalyzes the NAD(P)-dependent oxidation of 4-(phosphooxy)-L-threonine (HTP) into 2-amino-3-oxo-4-(phosphooxy)butyric acid which spontaneously decarboxylates to form 3-amino-2-oxopropyl phosphate (AHAP). The polypeptide is 4-hydroxythreonine-4-phosphate dehydrogenase (Stutzerimonas stutzeri (strain A1501) (Pseudomonas stutzeri)).